The chain runs to 310 residues: MSKKIVLALGGNALGDDLAGQMKAVKITSQAIVDLIAQGHEVIVTHGNGPQVGMINQAFEAAAKTEAHSPMLPMSVCVALSQGYIGYDLQNALREELLSRGINKPVATLVTQVEVDANDPAFLNPTKPIGSFFTEQEAEQLTKQGYTLKEDAGRGYRRVVASPKPVDIIEKETVKALVDAGQVVITVGGGGIPVIREGNHLRGASAVIDKDWASARLAEMIDADMLIILTAVEKVAINFGKENEQWLDRLSLSDAERFIEEGHFAKGSMLPKVEAAASFARSRAGREALITVLSKAKEGIEGKTGTVICQ.

Belongs to the carbamate kinase family.

The sequence is that of Carbamate kinase-like protein YqeA (yqeA) from Escherichia coli (strain K12).